The following is a 117-amino-acid chain: Putative pterin-4-alpha-carbinolamine dehydratase (117 aa).

Belongs to the pterin-4-alpha-carbinolamine dehydratase family.

The catalysed reaction is (4aS,6R)-4a-hydroxy-L-erythro-5,6,7,8-tetrahydrobiopterin = (6R)-L-erythro-6,7-dihydrobiopterin + H2O. This Colwellia psychrerythraea (strain 34H / ATCC BAA-681) (Vibrio psychroerythus) protein is Putative pterin-4-alpha-carbinolamine dehydratase.